Here is a 955-residue protein sequence, read N- to C-terminus: Glycine dehydrogenase (decarboxylating) (955 aa).

Lys-702 carries the post-translational modification N6-(pyridoxal phosphate)lysine.

The protein belongs to the GcvP family. As to quaternary structure, the glycine cleavage system is composed of four proteins: P, T, L and H. It depends on pyridoxal 5'-phosphate as a cofactor.

It catalyses the reaction N(6)-[(R)-lipoyl]-L-lysyl-[glycine-cleavage complex H protein] + glycine + H(+) = N(6)-[(R)-S(8)-aminomethyldihydrolipoyl]-L-lysyl-[glycine-cleavage complex H protein] + CO2. The glycine cleavage system catalyzes the degradation of glycine. The P protein binds the alpha-amino group of glycine through its pyridoxal phosphate cofactor; CO(2) is released and the remaining methylamine moiety is then transferred to the lipoamide cofactor of the H protein. This is Glycine dehydrogenase (decarboxylating) from Bradyrhizobium diazoefficiens (strain JCM 10833 / BCRC 13528 / IAM 13628 / NBRC 14792 / USDA 110).